Reading from the N-terminus, the 100-residue chain is Small ribosomal subunit protein uS14c (100 aa).

It belongs to the universal ribosomal protein uS14 family. As to quaternary structure, part of the 30S ribosomal subunit.

The protein localises to the plastid. Its subcellular location is the chloroplast. Its function is as follows. Binds 16S rRNA, required for the assembly of 30S particles. In Oenothera argillicola (Appalachian evening primrose), this protein is Small ribosomal subunit protein uS14c.